Consider the following 849-residue polypeptide: Disks large homolog 3 (849 aa).

The disordered stretch occupies residues 32–101; sequence DWQVPDPYGP…GKSTPKLNGS (70 aa). The segment covering 41 to 53 has biased composition (gly residues); it reads PSGGNGASSGYGG. Positions 57–69 are enriched in polar residues; sequence QTLPSQAGATPTP. 3 PDZ domains span residues 149 to 235, 244 to 330, and 404 to 484; these read EIVL…VRRR, EVNL…VAKP, and KIIL…AQYR. Ser-157 carries the phosphoserine modification. The SH3 domain occupies 519-589; it reads KRSLYVRALF…PSKKRVEKKE (71 aa). One can recognise a Guanylate kinase-like domain in the interval 659-834; it reads ARPVIILGPM…IYNKIKQIIE (176 aa). Tyr-705 is modified (phosphotyrosine).

The protein belongs to the MAGUK family. As to quaternary structure, interacts through its PDZ domains with NETO1, GRIN2B, SYNGAP1 and APC. Interacts through its first two PDZ domains with ERBB4. Interacts through its third PDZ domain with NLGN1, and probably with NLGN2 and NLGN3. Interacts through its guanylate kinase-like domain with DLGAP1, DLGAP2, DLGAP3 and DLGAP4. Interacts with FRMPD4 (via C-terminus). Interacts with LRFN1, LRFN2 and LRFN4. Interacts with FLTP. Interacts with GPR85. Interacts with DGKI (via PDZ-binding motif).

Its function is as follows. Required for learning most likely through its role in synaptic plasticity following NMDA receptor signaling. The polypeptide is Disks large homolog 3 (Dlg3) (Mus musculus (Mouse)).